A 604-amino-acid polypeptide reads, in one-letter code: Glutamine--fructose-6-phosphate aminotransferase [isomerizing] (604 aa).

Cys-2 serves as the catalytic Nucleophile; for GATase activity. Positions 2–219 constitute a Glutamine amidotransferase type-2 domain; the sequence is CGIMGAVSER…EGDSACVTTQ (218 aa). SIS domains lie at 279 to 427 and 454 to 594; these read LRAS…DNRA and LASL…VDQP. Lys-599 serves as the catalytic For Fru-6P isomerization activity.

As to quaternary structure, homodimer.

It is found in the cytoplasm. The catalysed reaction is D-fructose 6-phosphate + L-glutamine = D-glucosamine 6-phosphate + L-glutamate. Functionally, catalyzes the first step in hexosamine metabolism, converting fructose-6P into glucosamine-6P using glutamine as a nitrogen source. The protein is Glutamine--fructose-6-phosphate aminotransferase [isomerizing] of Legionella pneumophila (strain Lens).